A 457-amino-acid chain; its full sequence is Carboxypeptidase N catalytic chain (457 aa).

The first 23 residues, 1–23 (MPDLPSAFLPLLLLSKFVTPVTF), serve as a signal peptide directing secretion. Residues 24 to 338 (RHHRYDDLVR…EALIQFLEQV (315 aa)) enclose the Peptidase M14 domain. The cysteines at positions 42 and 104 are disulfide-linked. Zn(2+) is bound by residues H86, E89, and H216. A disulfide bridge connects residues C271 and C311. E308 functions as the Proton donor/acceptor in the catalytic mechanism. O-linked (GalNAc...) threonine glycosylation is found at T400, T402, and T409. Residues 418–457 (SSSQVYPVQRAPGRGQGGRAKQPRTSRKKDPATKRHRGPA) form a disordered region.

This sequence belongs to the peptidase M14 family. As to quaternary structure, tetramer of two catalytic chains and two glycosylated inactive chains. It depends on Zn(2+) as a cofactor. As to expression, mainly expressed in liver. Also detected in lung, stomach, intestine, spleen and kidney.

Its subcellular location is the secreted. The protein resides in the extracellular space. It carries out the reaction Release of a C-terminal basic amino acid, preferentially lysine.. Its function is as follows. Protects the body from potent vasoactive and inflammatory peptides containing C-terminal Arg or Lys (such as kinins or anaphylatoxins) which are released into the circulation. This is Carboxypeptidase N catalytic chain (Cpn1) from Mus musculus (Mouse).